Reading from the N-terminus, the 548-residue chain is Tryprostatin B 6-hydroxylase (548 aa).

3 consecutive transmembrane segments (helical) span residues 5–25 (MKCG…LWYF), 35–54 (WRYV…LLYA), and 73–93 (LLMV…RTLF). C491 serves as a coordination point for heme.

Belongs to the cytochrome P450 family. Requires heme as cofactor.

The protein resides in the membrane. The enzyme catalyses tryprostatin B + reduced [NADPH--hemoprotein reductase] + O2 = 6-hydroxytryprostatin B + oxidized [NADPH--hemoprotein reductase] + H2O + H(+). Its pathway is mycotoxin biosynthesis. Functionally, cytochrome P450 monooxygenase; part of the gene cluster that mediates the biosynthesis of fumitremorgins, indole alkaloids that carry not only intriguing chemical structures, but also interesting biological and pharmacological activities. The biosynthesis of fumitremorgin-type alkaloids begins by condensation of the two amino acids L-tryptophan and L-proline to brevianamide F, catalyzed by the non-ribosomal peptide synthetase ftmPS/ftmA. Brevianamide F is then prenylated by the prenyltransferase ftmPT1/ftmB in the presence of dimethylallyl diphosphate, resulting in the formation of tryprostatin B. The three cytochrome P450 monooxygenases, ftmP450-1/ftmC, ftmP450-2/ftmE and ftmP450-3/FtmG, are responsible for the conversion of tryprostatin B to 6-hydroxytryprostatin B, tryprostatin A to fumitremorgin C and fumitremorgin C to 12,13-dihydroxyfumitremorgin C, respectively. The putative methyltransferase ftmMT/ftmD is expected for the conversion of 6-hydroxytryprostatin B to tryprostatin A. FtmPT2/FtmH catalyzes the prenylation of 12,13-dihydroxyfumitre-morgin C in the presence of dimethylallyl diphosphate, resulting in the formation of fumitremorgin B. Fumitremorgin B is further converted to verruculogen by ftmOx1/ftmF via the insertion of an endoperoxide bond between the two prenyl moieties. Finally, verruculogen is further converted to fumitremorgin A by the verruculogen prenyltransferase ftmPT3. The polypeptide is Tryprostatin B 6-hydroxylase (Neosartorya fischeri (strain ATCC 1020 / DSM 3700 / CBS 544.65 / FGSC A1164 / JCM 1740 / NRRL 181 / WB 181) (Aspergillus fischerianus)).